The primary structure comprises 88 residues: Small ribosomal subunit protein uS19 (88 aa).

This sequence belongs to the universal ribosomal protein uS19 family.

Protein S19 forms a complex with S13 that binds strongly to the 16S ribosomal RNA. The sequence is that of Small ribosomal subunit protein uS19 from Mycoplasma mycoides subsp. mycoides SC (strain CCUG 32753 / NCTC 10114 / PG1).